The chain runs to 297 residues: uncharacterized protein (297 aa).

The segment at 1 to 29 is disordered; that stretch reads MAESKAKNMFQKLSLTPKRNHEHDAGRNI. Over residues 19–29 the composition is skewed to basic and acidic residues; it reads RNHEHDAGRNI.

This is an uncharacterized protein from Caenorhabditis elegans.